A 410-amino-acid chain; its full sequence is Single Ig IL-1-related receptor (410 aa).

Residues 1–118 (MPGVCDRAPD…TLQRAGPTSH (118 aa)) are Extracellular-facing. The Ig-like C2-type domain occupies 9–109 (PDFLSPSEDQ…IQNISFSSFT (101 aa)). N-linked (GlcNAc...) asparagine glycosylation is found at N31, N73, N86, and N102. A disulfide bond links C32 and C98. A helical; Signal-anchor for type III membrane protein membrane pass occupies residues 119-139 (VAAVLASLLVLLALLLAALLY). At 140-410 (VKCRLNVLLW…FYCLVSKDDM (271 aa)) the chain is on the cytoplasmic side. Residues 163-307 (KLYDAYVSYS…DFWKEVQLAL (145 aa)) form the TIR domain. Positions 340 to 390 (EGRALDSEVDPDPEGDLGVRGPVFGEPSAPPHTSGVSLGESRSSEVDVSDL) are disordered. S383 is modified (phosphoserine).

This sequence belongs to the interleukin-1 receptor family. As to quaternary structure, interacts with IL1R1, IRAK1, TLR4, TLR5, TLR9 and TRAF6. Upon IL-1 stimulation found in a complex at least composed of IL1R1, SIGIRR, MYD88, IRAK1 and TRAF6. Upon stimulation with LPC found in a complex at least composed of TLR4, SIG1IR, MYD88, IRAK1 and TRAF6. Interacts with PALM3. As to expression, mainly expressed in epithelial tissues such as kidney, lung and gut.

It is found in the membrane. Functionally, acts as a negative regulator of the Toll-like and IL-1R receptor signaling pathways. Attenuates the recruitment of receptor-proximal signaling components to the TLR4 receptor, probably through an TIR-TIR domain interaction with TLR4. Through its extracellular domain interferes with the heterodimerization of Il1R1 and IL1RAP. In Homo sapiens (Human), this protein is Single Ig IL-1-related receptor (SIGIRR).